Reading from the N-terminus, the 490-residue chain is Bifunctional dihydrocamalexate synthase/camalexin synthase (490 aa).

Residues 1 to 21 form a helical membrane-spanning segment; it reads MSVFLCFLVLLPLILIFLNVL.

It belongs to the cytochrome P450 family.

Its subcellular location is the membrane. The catalysed reaction is 2-(L-cystein-S-yl)-2-(1H-indol-3-yl)-acetonitrile + 2 reduced [NADPH--hemoprotein reductase] + 2 O2 = camalexin + hydrogen cyanide + 2 oxidized [NADPH--hemoprotein reductase] + CO2 + 4 H2O + 2 H(+). It catalyses the reaction 2-(L-cystein-S-yl)-2-(1H-indol-3-yl)-acetonitrile + reduced [NADPH--hemoprotein reductase] + O2 = (R)-dihydrocamalexate + hydrogen cyanide + oxidized [NADPH--hemoprotein reductase] + 2 H2O + 2 H(+). It carries out the reaction (R)-dihydrocamalexate + reduced [NADPH--hemoprotein reductase] + O2 = camalexin + oxidized [NADPH--hemoprotein reductase] + CO2 + 2 H2O. Multifunctional enzyme involved in the biosynthesis of the indole-derived phytoalexin camalexin. Catalyzes two reactions, the formation of dihydrocamalexate from indole-3-acetonitrile-cysteine conjugate and the oxidative decarboxylation of dihydrocamalexate which is the final step in camalexin biosynthesis. Required for the resistance to the fungal pathogens A.brassicicola, B.cinerea, B.elliptica, B.tulipae, L.maculans and Colletotrichum higginsianum. Seems not to be required for resistance to P.syringae, P.porri, and not involved in age-related resistance. This Arabidopsis thaliana (Mouse-ear cress) protein is Bifunctional dihydrocamalexate synthase/camalexin synthase (CYP71B15).